We begin with the raw amino-acid sequence, 444 residues long: MYESVDVNPFLMMDYYNQSRGCLIPDKMPHPFSSSIRHQHWSGSNHSIETQSTSSEEIVPSPPSPPPPPRIYKPCFVCQDKSSGYHYGVSACEGCKGFFRRSIQKNMVYTCHREKNCIINKVTRNRCQYCRLQKCLEVGMSKESVRNDRNKKKKEEKKPECTENYTLSPDTEQMIDRVRKAHQETFPSLCQLGKYTTSNSSERRVALDVDLWDKFSELSTKCIIKTVEFAKQLPGFTTLTIADQITLLKAACLDILILRICTRYTPEQDTMTFSDGLTLNRTQMHNAGFGPLTDLVFAFANQLLPLEMDDAETGLLSAICLLCGDRQDLEQADKVDVLQEPLLEALKIYVRNRRPHKPHMFPKMLMKITDLRSISAKGAERVITLKMEIPGSMPPLIQEMLENSEGLESSSGAQGSRASATTPGSCSPSLSPNSAQSSPPTQSP.

The modulating stretch occupies residues 1–71 (MYESVDVNPF…PPSPPPPPRI (71 aa)). Residues 35–46 (SIRHQHWSGSNH) show a composition bias toward polar residues. Positions 35 to 67 (SIRHQHWSGSNHSIETQSTSSEEIVPSPPSPPP) are disordered. Residues 47–58 (SIETQSTSSEEI) are compositionally biased toward low complexity. Residues 72–147 (YKPCFVCQDK…VGMSKESVRN (76 aa)) constitute a DNA-binding region (nuclear receptor). 2 consecutive NR C4-type zinc fingers follow at residues 75-95 (CFVC…CEGC) and 111-130 (CHRE…CQYC). The segment at 148-169 (DRNKKKKEEKKPECTENYTLSP) is hinge. In terms of domain architecture, NR LBD spans 170–404 (DTEQMIDRVR…PLIQEMLENS (235 aa)). The 9aaTAD motif lies at 395-403 (PLIQEMLEN). The segment at 402–444 (ENSEGLESSSGAQGSRASATTPGSCSPSLSPNSAQSSPPTQSP) is disordered.

The protein belongs to the nuclear hormone receptor family. NR1 subfamily. Heterodimer; with an rxr molecule. Binds DNA preferentially as a rar/rxr heterodimer. In the embryo, zygotic expression largely overlaps that of rarab, with high levels in hindbrain, lateral mesoderm and tail bud. In the adult, strong expression in brain and muscle, weaker expression in ovary, liver and digestive tract.

It localises to the nucleus. Functionally, receptor for retinoic acid. Retinoic acid receptors bind as heterodimers to their target response elements in response to their ligands, all-trans or 9-cis retinoic acid, and regulate gene expression in various biological processes. The rar/rxr heterodimers bind to the retinoic acid response elements (RARE) composed of tandem 5'-AGGTCA-3' sites known as DR1-DR5. Required for hindbrain patterning. The chain is Retinoic acid receptor alpha-A from Danio rerio (Zebrafish).